The chain runs to 389 residues: S-adenosylmethionine synthase (389 aa).

His17 is an ATP binding site. Asp19 is a binding site for Mg(2+). Glu45 is a binding site for K(+). The L-methionine site is built by Glu58 and Gln101. A flexible loop region spans residues 101–111 (QSPDIAQGVNP). ATP is bound by residues 168–170 (DGK), 234–235 (RF), Asp243, 249–250 (RK), and Lys270. Asp243 lines the L-methionine pocket. Position 274 (Lys274) interacts with L-methionine.

Belongs to the AdoMet synthase family. In terms of assembly, homotetramer; dimer of dimers. It depends on Mg(2+) as a cofactor. K(+) is required as a cofactor.

Its subcellular location is the cytoplasm. The enzyme catalyses L-methionine + ATP + H2O = S-adenosyl-L-methionine + phosphate + diphosphate. It participates in amino-acid biosynthesis; S-adenosyl-L-methionine biosynthesis; S-adenosyl-L-methionine from L-methionine: step 1/1. Functionally, catalyzes the formation of S-adenosylmethionine (AdoMet) from methionine and ATP. The overall synthetic reaction is composed of two sequential steps, AdoMet formation and the subsequent tripolyphosphate hydrolysis which occurs prior to release of AdoMet from the enzyme. In Syntrophobacter fumaroxidans (strain DSM 10017 / MPOB), this protein is S-adenosylmethionine synthase.